The chain runs to 407 residues: Acetate kinase (407 aa).

Asn10 is a binding site for Mg(2+). Lys17 serves as a coordination point for ATP. Substrate is bound at residue Arg91. Asp150 functions as the Proton donor/acceptor in the catalytic mechanism. ATP contacts are provided by residues 210–214 (HLGNG), 285–287 (DCR), and 338–342 (GIGEN). Glu392 lines the Mg(2+) pocket.

The protein belongs to the acetokinase family. As to quaternary structure, homodimer. Mg(2+) is required as a cofactor. It depends on Mn(2+) as a cofactor.

The protein localises to the cytoplasm. It carries out the reaction acetate + ATP = acetyl phosphate + ADP. The protein operates within metabolic intermediate biosynthesis; acetyl-CoA biosynthesis; acetyl-CoA from acetate: step 1/2. Functionally, catalyzes the formation of acetyl phosphate from acetate and ATP. Can also catalyze the reverse reaction. The protein is Acetate kinase of Mannheimia succiniciproducens (strain KCTC 0769BP / MBEL55E).